Reading from the N-terminus, the 43-residue chain is Protein PsbN (43 aa).

Residues valine 7–glutamine 29 traverse the membrane as a helical segment.

This sequence belongs to the PsbN family.

It localises to the plastid. The protein localises to the chloroplast thylakoid membrane. Its function is as follows. May play a role in photosystem I and II biogenesis. The polypeptide is Protein PsbN (Draba nemorosa (Woodland whitlowgrass)).